The chain runs to 381 residues: MIISSASDYREAARRRVPPFMFHYADGGSYAEQTLARNVSDLENIALRQRVLKDMSELDTSIELFGEKLSMPTILAPVGACGMYARRGEVQAAQAADNKGVPFTLSTVSICPIEEVAPAIKRPMWFQLYVLKDRGFMKNALERAKAAGCSTLVFTVDMPTPGARYRDMHSGMSGPYKEIRRVLQGFTHPFWAYDVGIKGKPHTLGNVSTYMGRQIGLDDYIGWLTENFDPSISWKDLEWIREFWEGPMVIKGILDPEDAKDAVRFGADGIVVSNHGGRQLDGVLSSARALPPIADAVKGDIKIIADSGIRNGLDIVRMLALGADATMLGRAFVYALGAEGRQGVENMLDIFKKEMHVAMTLTSNRTIADIKPEALVDLSKL.

The 380-residue stretch at 1–380 folds into the FMN hydroxy acid dehydrogenase domain; that stretch reads MIISSASDYR…KPEALVDLSK (380 aa). Tyr-24 serves as a coordination point for substrate. Ser-106 and Gln-127 together coordinate FMN. Tyr-129 is a substrate binding site. Thr-155 is an FMN binding site. Position 164 (Arg-164) interacts with substrate. An FMN-binding site is contributed by Lys-251. The Proton acceptor role is filled by His-275. Arg-278 contributes to the substrate binding site. 306–330 provides a ligand contact to FMN; that stretch reads DSGIRNGLDIVRMLALGADATMLGR.

Belongs to the FMN-dependent alpha-hydroxy acid dehydrogenase family. It depends on FMN as a cofactor.

The protein resides in the cell inner membrane. The catalysed reaction is (S)-lactate + A = pyruvate + AH2. Its function is as follows. Catalyzes the conversion of L-lactate to pyruvate. Is coupled to the respiratory chain. In Haemophilus influenzae (strain ATCC 51907 / DSM 11121 / KW20 / Rd), this protein is L-lactate dehydrogenase.